A 381-amino-acid chain; its full sequence is L-lactate dehydrogenase (381 aa).

Residues 1 to 380 (MIISSASDYR…KPEALVDLSK (380 aa)) enclose the FMN hydroxy acid dehydrogenase domain. Y24 contacts substrate. FMN contacts are provided by S106 and Q127. Substrate is bound at residue Y129. T155 provides a ligand contact to FMN. R164 contacts substrate. K251 lines the FMN pocket. H275 serves as the catalytic Proton acceptor. Position 278 (R278) interacts with substrate. 306–330 (DSGIRNGLDIVRMLALGADATMLGR) is an FMN binding site.

It belongs to the FMN-dependent alpha-hydroxy acid dehydrogenase family. Requires FMN as cofactor.

Its subcellular location is the cell inner membrane. It catalyses the reaction (S)-lactate + A = pyruvate + AH2. Functionally, catalyzes the conversion of L-lactate to pyruvate. Is coupled to the respiratory chain. This Haemophilus influenzae (strain ATCC 51907 / DSM 11121 / KW20 / Rd) protein is L-lactate dehydrogenase.